Consider the following 299-residue polypeptide: S-fimbrial protein subunit SfaH (299 aa).

The protein belongs to the fimbrial protein family.

The protein localises to the fimbrium. Its function is as follows. Fimbriae (also called pili), polar filaments radiating from the surface of the bacterium to a length of 0.5-1.5 micrometers and numbering 100-300 per cell, enable bacteria to colonize the epithelium of specific host organs. Functionally, a minor fimbrial subunit. This protein is necessary for full expression of S-specific binding. S-fimbrial adhesins enable pathogenic E.coli causing urinary-tract infections or newborn meningitis to attach to glycoproteins terminating with alpha-sialic acid-(2-3)-beta-Gal. In Escherichia coli O6:K15:H31 (strain 536 / UPEC), this protein is S-fimbrial protein subunit SfaH (sfaH).